We begin with the raw amino-acid sequence, 233 residues long: Serine-rich 25 kDa antigen protein (233 aa).

The segment at 35–219 (KNEASPEKLE…DNNNLDAASS (185 aa)) is disordered. The span at 38-53 (ASPEKLEEAEEKEKSS) shows a compositional bias: basic and acidic residues. Over residues 61-71 (SNEDNEDDEDE) the composition is skewed to acidic residues. Tandem repeats lie at residues 82–93 (SSSDKPDNKPEA), 102–113 (SSSDKPDNKPEA), 114–125 (SSSDKPDNKPEA), 126–137 (SSSDKPDNKPEA), 138–149 (SSSDKPDNKPEA), 150–161 (SSSDKPDNKPEA), 162–169 (SSTNKPEA), 170–177 (SSTNKPEA), 178–185 (SSTNKPEA), and 186–193 (SSTNKPEA). Residues 82–161 (SSSDKPDNKP…SDKPDNKPEA (80 aa)) form a 6 X 12 AA tandem repeats of S-S-S-D-K-P-D-N-K-P-E-A region. Basic and acidic residues predominate over residues 83–159 (SSDKPDNKPE…SSSDKPDNKP (77 aa)). A compositionally biased stretch (polar residues) spans 160-192 (EASSTNKPEASSTNKPEASSTNKPEASSTNKPE). Positions 162-193 (SSTNKPEASSTNKPEASSTNKPEASSTNKPEA) are 4 X 8 AA tandem repeats of S-S-T-N-K-P-E-A. Low complexity predominate over residues 193 to 219 (ASSTSNSNDKSGSSSDNDNNNLDAASS).

In terms of processing, phosphorylated on serine residue(s). Post-translationally, O-glycosylated; glycans consist of single N-acetylglucosamine residues. O-acylated; acyl group is probably palmitate, not myristate.

It localises to the cell membrane. Functionally, plays a role in the adhesion to host cells. Involved in the adhesion to host apoptotic cells thereby facilitating their phagocytosis. The polypeptide is Serine-rich 25 kDa antigen protein (Entamoeba histolytica (strain ATCC 30459 / HM-1:IMSS / ABRM)).